We begin with the raw amino-acid sequence, 236 residues long: uncharacterized protein (236 aa).

To E.coli YfjP and YkfA.

This is an uncharacterized protein from Escherichia coli (strain K12).